Reading from the N-terminus, the 643-residue chain is UvrABC system protein C (643 aa).

Residues 25-104 (AEPGVYFMRD…IKQHQPHFNV (80 aa)) enclose the GIY-YIG domain. The region spanning 214–249 (SELVELLEAQMLQAAENLEFEKAAKIRDQIRGLEGL) is the UVR domain.

This sequence belongs to the UvrC family. As to quaternary structure, interacts with UvrB in an incision complex.

It localises to the cytoplasm. Functionally, the UvrABC repair system catalyzes the recognition and processing of DNA lesions. UvrC both incises the 5' and 3' sides of the lesion. The N-terminal half is responsible for the 3' incision and the C-terminal half is responsible for the 5' incision. This Synechococcus elongatus (strain ATCC 33912 / PCC 7942 / FACHB-805) (Anacystis nidulans R2) protein is UvrABC system protein C.